The chain runs to 317 residues: Large ribosomal subunit protein uL10 (317 aa).

It belongs to the universal ribosomal protein uL10 family. As to quaternary structure, P0 forms a pentameric complex by interaction with dimers of P1 and P2. Post-translationally, phosphorylated.

Its function is as follows. Ribosomal protein P0 is the functional equivalent of E.coli protein L10. This chain is Large ribosomal subunit protein uL10 (rplp0), found in Ictalurus punctatus (Channel catfish).